Here is a 473-residue protein sequence, read N- to C-terminus: Pyruvate kinase (473 aa).

A substrate-binding site is contributed by arginine 32. Residues asparagine 34, serine 36, aspartate 66, and threonine 67 each coordinate K(+). 34 to 37 (NFSH) provides a ligand contact to ATP. The ATP site is built by arginine 73 and lysine 155. Glutamate 221 is a Mg(2+) binding site. 3 residues coordinate substrate: glycine 244, aspartate 245, and threonine 277. Aspartate 245 contributes to the Mg(2+) binding site.

It belongs to the pyruvate kinase family. As to quaternary structure, homotetramer. Mg(2+) serves as cofactor. K(+) is required as a cofactor.

It catalyses the reaction pyruvate + ATP = phosphoenolpyruvate + ADP + H(+). It participates in carbohydrate degradation; glycolysis; pyruvate from D-glyceraldehyde 3-phosphate: step 5/5. This is Pyruvate kinase (pyk) from Clostridium acetobutylicum (strain ATCC 824 / DSM 792 / JCM 1419 / IAM 19013 / LMG 5710 / NBRC 13948 / NRRL B-527 / VKM B-1787 / 2291 / W).